A 410-amino-acid polypeptide reads, in one-letter code: F-box/WD-40 repeat-containing protein 1 (410 aa).

The region spanning 32–79 (SKECSLLPFELFEEILCRVPTKSLLRLKLTCKRWLALFNDKRFIYKHL) is the F-box domain. WD repeat units lie at residues 109–150 (PNKF…VRWI) and 269–309 (DVHN…NGVS).

This chain is F-box/WD-40 repeat-containing protein 1 (FBW1), found in Arabidopsis thaliana (Mouse-ear cress).